The following is a 1117-amino-acid chain: Cytospin-A (1117 aa).

Disordered regions lie at residues 1-176 (MKKA…NQIS), 293-323 (SLSP…GSVE), and 358-390 (SSDD…NASE). The segment covering 45–90 (TAASLSKTKSSDDLLAGMAGGVTVTNGVKGKKSTCPSAAPSASAPA) has biased composition (low complexity). Positions 93–117 (TVENKSKISTGTASSTKRSTSTGNK) are enriched in polar residues. Basic and acidic residues-rich tracts occupy residues 120–131 (SSTRERLRERTR) and 158–171 (TATE…KSKS). Residues 168 to 280 (KSKSDNQISD…LNALGFSLEQ (113 aa)) adopt a coiled-coil conformation. Over residues 293-303 (SLSPEITPGNQ) the composition is skewed to polar residues. Positions 358–377 (SSDDALDAPSSSESEGIPSI) are enriched in low complexity. Phosphoserine is present on residues Ser-384, Ser-385, and Ser-389. 2 coiled-coil regions span residues 394–449 (ACLT…MESL) and 487–807 (RYME…RGRV). 3 positions are modified to phosphoserine: Ser-868, Ser-881, and Ser-887. The tract at residues 920–997 (TSSASRPASL…PTTRSRIREE (78 aa)) is disordered. The span at 946–956 (RSSEEVKRDIS) shows a compositional bias: basic and acidic residues. Residues 971 to 990 (TTSPQLSLSSSPTASVTPTT) show a composition bias toward low complexity. The 106-residue stretch at 1011-1116 (GSKRNALLKW…YVTAIYKYFE (106 aa)) folds into the Calponin-homology (CH) domain.

The protein belongs to the cytospin-A family. In terms of assembly, may interact with both microtubules and actin cytoskeleton.

It localises to the cytoplasm. Its subcellular location is the cytoskeleton. The protein resides in the spindle. It is found in the cell junction. The protein localises to the gap junction. In terms of biological role, involved in cytokinesis and spindle organization. May play a role in actin cytoskeleton organization and microtubule stabilization and hence required for proper cell adhesion and migration. The protein is Cytospin-A (SPECC1L) of Homo sapiens (Human).